Consider the following 804-residue polypeptide: Leucine--tRNA ligase (804 aa).

Positions 40–51 (PYPSGAGLHVGH) match the 'HIGH' region motif. A 'KMSKS' region motif is present at residues 576–580 (KMSKS). Residue K579 participates in ATP binding.

The protein belongs to the class-I aminoacyl-tRNA synthetase family.

The protein localises to the cytoplasm. The catalysed reaction is tRNA(Leu) + L-leucine + ATP = L-leucyl-tRNA(Leu) + AMP + diphosphate. The sequence is that of Leucine--tRNA ligase from Staphylococcus epidermidis (strain ATCC 35984 / DSM 28319 / BCRC 17069 / CCUG 31568 / BM 3577 / RP62A).